The chain runs to 120 residues: Holo-[acyl-carrier-protein] synthase (120 aa).

Residues Asp-8 and Glu-58 each coordinate Mg(2+).

The protein belongs to the P-Pant transferase superfamily. AcpS family. Mg(2+) is required as a cofactor.

It localises to the cytoplasm. The enzyme catalyses apo-[ACP] + CoA = holo-[ACP] + adenosine 3',5'-bisphosphate + H(+). In terms of biological role, transfers the 4'-phosphopantetheine moiety from coenzyme A to a Ser of acyl-carrier-protein. The sequence is that of Holo-[acyl-carrier-protein] synthase from Streptococcus pneumoniae (strain Hungary19A-6).